We begin with the raw amino-acid sequence, 421 residues long: ATP-dependent RNA helicase RhlB (421 aa).

Residues 9–37 carry the Q motif motif; the sequence is QKFSDFALHAKVIEALENKGFHYCTPIQA. The 180-residue stretch at 40 to 219 folds into the Helicase ATP-binding domain; the sequence is LPLTLAGRDV…FEQMNNAEYV (180 aa). An ATP-binding site is contributed by 53-60; it reads AQTGTGKT. The short motif at 165–168 is the DEAD box element; it reads DEAD. Positions 245-390 constitute a Helicase C-terminal domain; that stretch reads RLLQTLIEEE…QSKYNPDALL (146 aa). Residues 386–421 form a disordered region; that stretch reads PDALLSELPPPKRLTRARSGNGPRRTGAPRNRRRPG. Over residues 405-414 the composition is skewed to low complexity; it reads GNGPRRTGAP.

This sequence belongs to the DEAD box helicase family. RhlB subfamily. Component of the RNA degradosome, which is a multiprotein complex involved in RNA processing and mRNA degradation.

Its subcellular location is the cytoplasm. The catalysed reaction is ATP + H2O = ADP + phosphate + H(+). Its function is as follows. DEAD-box RNA helicase involved in RNA degradation. Has RNA-dependent ATPase activity and unwinds double-stranded RNA. The chain is ATP-dependent RNA helicase RhlB from Enterobacter sp. (strain 638).